The following is a 331-amino-acid chain: FMRFamide-related neuropeptides (331 aa).

A signal peptide spans 1-25 (MRCWSPCSLLVVIVIYCLSSHTSEA). A propeptide spanning residues 26–65 (FDLAQACVESQRLSLLPICDTIFAVQQEGVQQSADDGMRS) is cleaved from the precursor. Phenylalanine amide occurs at positions 71 and 83. Residues 86-94 (NVPDLPFED) constitute a propeptide that is removed on maturation. Phe-100 bears the Phenylalanine amide mark. A propeptide spanning residues 103 to 168 (AAPQLDELLK…YIDDVEDSDV (66 aa)) is cleaved from the precursor. Residues 122-158 (QKADETSVRRKRSTDAAPQNNAENPEQKNDSAKITKR) are disordered. Basic and acidic residues predominate over residues 146–158 (PEQKNDSAKITKR). Phenylalanine amide occurs at positions 174 and 181. A propeptide spanning residues 184 to 194 (NPSDVGNKLTE) is cleaved from the precursor. Phe-200 is subject to Phenylalanine amide. The propeptide occupies 203–205 (DPE). Phenylalanine amide is present on Phe-211. Positions 214-216 (SDD) are excised as a propeptide. Position 222 is a phenylalanine amide (Phe-222). Residues 225-236 (NPSDAEDELEED) constitute a propeptide that is removed on maturation. Phe-242 is subject to Phenylalanine amide. Positions 245-254 (GGEDDEEEAE) are excised as a propeptide. The residue at position 260 (Phe-260) is a Phenylalanine amide. Positions 263–265 (DPE) are excised as a propeptide. Position 271 is a phenylalanine amide (Phe-271). Positions 274 to 277 (SGED) are excised as a propeptide. The segment covering 279 to 296 (RFMRFGRNPDEQEADKRF) has biased composition (basic and acidic residues). The interval 279 to 310 (RFMRFGRNPDEQEADKRFMRFGRGGEDDEVST) is disordered. Position 283 is a phenylalanine amide (Phe-283). Positions 286–293 (NPDEQEAD) are excised as a propeptide. Phe-299 carries the phenylalanine amide modification. Residues 302-312 (GGEDDEVSTED) constitute a propeptide that is removed on maturation. The residue at position 318 (Phe-318) is a Phenylalanine amide. A propeptide spanning residues 321–331 (SADKCKGCLEG) is cleaved from the precursor.

Belongs to the FARP (FMRFamide related peptide) family.

It localises to the secreted. Its function is as follows. Excitatory neurotransmitters that directly modulate chromatophore function by activating chromatophore expansion at the chromatophore neuromuscular junction. The chain is FMRFamide-related neuropeptides from Doryteuthis opalescens (California market squid).